The chain runs to 422 residues: E3 ubiquitin-protein ligase IE2 (422 aa).

The span at 1 to 10 (MSRQINAVTP) shows a compositional bias: polar residues. Disordered stretches follow at residues 1–86 (MSRQ…VQII) and 165–215 (SPRS…EGEE). A compositionally biased stretch (basic residues) spans 14 to 26 (SRRHRLSLSRRRI). A compositionally biased stretch (low complexity) spans 36–63 (PSSSSRSQPSSSSRSQPYSSSRSQPYSS). A compositionally biased stretch (basic and acidic residues) spans 71–80 (ERSQEQRVSE). A compositionally biased stretch (polar residues) spans 179–196 (DVLSQSPDLFDSPQSPQQ). Positions 200–215 (ELEDEDEEEEEEEGEE) are enriched in acidic residues. An RING-type; degenerate zinc finger spans residues 220 to 268 (CNICFTTLKDTKNVDSSFVTSIDCNHAVCFKCYVRIIMDNSTYKCFCSA). Positions 314 to 414 (IDLNDVERLE…RRNSELVAEL (101 aa)) form a coiled coil.

This sequence belongs to the alphabaculovirus IE2 protein family. As to quaternary structure, homooligomer. Post-translationally, auto-ubiquitinated.

It localises to the host nucleus. It carries out the reaction S-ubiquitinyl-[E2 ubiquitin-conjugating enzyme]-L-cysteine + [acceptor protein]-L-lysine = [E2 ubiquitin-conjugating enzyme]-L-cysteine + N(6)-ubiquitinyl-[acceptor protein]-L-lysine.. Functionally, RING-finger E3 ubiquitin ligase that plays an important regulatory role during the initial stages of infection. Migrates to specific nuclear foci early in infection supposely to prepare the sites for viral replication by targeting and ubiquitinating host proteins. The chain is E3 ubiquitin-protein ligase IE2 (IE2) from Bombyx mori nuclear polyhedrosis virus (BmNPV).